We begin with the raw amino-acid sequence, 397 residues long: Protein PEP-RELATED DEVELOPMENT ARRESTED 1, chloroplastic (397 aa).

Residues 1-52 (MLQSIHLRFSSTPSPSKRESLIIPSVICSFPFTSSSFRPKQTQKLKRLVQFC) constitute a chloroplast transit peptide. Over residues 315-334 (KDEGADNLSKEDDSSTEGRK) the composition is skewed to basic and acidic residues. The segment at 315-351 (KDEGADNLSKEDDSSTEGRKPSGLNGRGSVTGRKPLP) is disordered.

Interacts with FSD2 and MRL7. In terms of tissue distribution, highly expressed in young leaves, shoots and flowers. Expressed at low levels in stems and siliques.

The protein localises to the plastid. It localises to the chloroplast stroma. The protein resides in the chloroplast nucleoid. Its function is as follows. Plays an essential role in early steps of chloroplast development. May be involved in the redox control of plastid gene expression by maintening the redox state around chloroplast nucleoids. May positively regulate plastid-encoded RNA polymerase (PEP) activity, through binding to FSD2. The protein is Protein PEP-RELATED DEVELOPMENT ARRESTED 1, chloroplastic (PRDA1) of Arabidopsis thaliana (Mouse-ear cress).